A 162-amino-acid polypeptide reads, in one-letter code: uncharacterized protein (162 aa).

This is an uncharacterized protein from Acanthamoeba polyphaga (Amoeba).